Consider the following 143-residue polypeptide: MAKKIIGFIKLQIPAGKANPSPPVGPALGQRGLNIMEFCKAFNAQTQSMEPGLPIPVVITAFADKSFTFIMKTPPATIMIKKAAKIEKGSPRPHTDKVGKITRAQAEEIAKAKMPDLTAADMDAAVRTIAGSARSMGITVEGL.

This sequence belongs to the universal ribosomal protein uL11 family. Part of the ribosomal stalk of the 50S ribosomal subunit. Interacts with L10 and the large rRNA to form the base of the stalk. L10 forms an elongated spine to which L12 dimers bind in a sequential fashion forming a multimeric L10(L12)X complex. Post-translationally, one or more lysine residues are methylated.

Forms part of the ribosomal stalk which helps the ribosome interact with GTP-bound translation factors. This chain is Large ribosomal subunit protein uL11, found in Polynucleobacter asymbioticus (strain DSM 18221 / CIP 109841 / QLW-P1DMWA-1) (Polynucleobacter necessarius subsp. asymbioticus).